The chain runs to 508 residues: Photosystem II CP47 reaction center protein (508 aa).

Helical transmembrane passes span 21-36 (AVHI…WAGS), 101-115 (IVFS…IWHW), 140-156 (GIHL…FGAF), 203-218 (IAAG…FHLS), 237-252 (VLSS…AFIV), and 457-472 (TFAL…HGAR).

Belongs to the PsbB/PsbC family. PsbB subfamily. As to quaternary structure, PSII is composed of 1 copy each of membrane proteins PsbA, PsbB, PsbC, PsbD, PsbE, PsbF, PsbH, PsbI, PsbJ, PsbK, PsbL, PsbM, PsbT, PsbX, PsbY, PsbZ, Psb30/Ycf12, at least 3 peripheral proteins of the oxygen-evolving complex and a large number of cofactors. It forms dimeric complexes. The cofactor is Binds multiple chlorophylls. PSII binds additional chlorophylls, carotenoids and specific lipids..

The protein localises to the plastid. It localises to the chloroplast thylakoid membrane. In terms of biological role, one of the components of the core complex of photosystem II (PSII). It binds chlorophyll and helps catalyze the primary light-induced photochemical processes of PSII. PSII is a light-driven water:plastoquinone oxidoreductase, using light energy to abstract electrons from H(2)O, generating O(2) and a proton gradient subsequently used for ATP formation. In Gnetum parvifolium (Small-leaved jointfir), this protein is Photosystem II CP47 reaction center protein.